The sequence spans 273 residues: SPRY domain-containing SOCS box protein 1 (273 aa).

Y31 carries the phosphotyrosine modification. The 199-residue stretch at 33 to 231 folds into the B30.2/SPRY domain; the sequence is KPTRLDLLLD…IRMRYLNGLD (199 aa). Residues 232–273 form the SOCS box domain; that stretch reads PEPLPLMDLCRRSVRLALGKGRLGEIHALPLPASLKAYLLYQ.

It belongs to the SPSB family. As to quaternary structure, component of the probable ECS(SPSB1) E3 ubiquitin-protein ligase complex which contains CUL5, RNF7/RBX2, Elongin BC complex and SPSB1. Interacts with CUL5, RNF7, ELOB and ELOC. Directly interacts with MET tyrosine kinase domain in the presence and in the absence of HGF, however HGF treatment has a positive effect on this interaction. When phosphorylated, interacts with RASA1 without affecting its stability. Interacts (via B30.2/SPRY domain) with PAWR; this interaction is direct and occurs in association with the Elongin BC complex. Interacts with NOS2 and EPHB2.

It is found in the cytoplasm. The protein localises to the cytosol. It functions in the pathway protein modification; protein ubiquitination. In terms of biological role, substrate recognition component of a SCF-like ECS (Elongin BC-CUL2/5-SOCS-box protein) E3 ubiquitin-protein ligase complex which mediates the ubiquitination and subsequent proteasomal degradation of target proteins. Negatively regulates nitric oxide (NO) production and limits cellular toxicity in activated macrophages by mediating the ubiquitination and proteasomal degradation of NOS2. Acts as a bridge which links NOS2 with the ECS E3 ubiquitin ligase complex components ELOC and CUL5. The chain is SPRY domain-containing SOCS box protein 1 (SPSB1) from Bos taurus (Bovine).